We begin with the raw amino-acid sequence, 436 residues long: DNA-dependent metalloprotease SPRTN (436 aa).

The SprT-like domain maps to Ile-19–Ile-186. Zn(2+) is bound at residue His-85. Glu-86 is an active-site residue. Residues His-89 and His-104 each coordinate Zn(2+). Residues Val-184–Lys-219 are disordered. The SHP-box signature appears at Phe-231 to Phe-239. A PIP-box motif is present at residues Gln-271 to Leu-277. Residues Gly-300–Lys-321 form a disordered region. The UBZ4-type zinc finger occupies Lys-408–Asn-435. Cys-411, Cys-414, His-426, and Cys-430 together coordinate Zn(2+).

The protein belongs to the Spartan family. As to quaternary structure, homodimer. Requires Zn(2+) as cofactor. Autocatalytically cleaved in response to double-stranded DNA-binding: autocatalytic cleavage takes place in trans and leads to inactivation.

It localises to the nucleus. It is found in the chromosome. With respect to regulation, DNA-binding activates the protease activity: single-stranded DNA-binding specifically activates ability to cleave covalent DNA-protein cross-links (DPCs). In contrast, double-stranded DNA-binding specifically activates autocatalytic cleavage, and subsequent inactivation. In terms of biological role, DNA-dependent metalloendopeptidase that mediates the proteolytic cleavage of covalent DNA-protein cross-links (DPCs) during DNA synthesis, thereby playing a key role in maintaining genomic integrity. DPCs are highly toxic DNA lesions that interfere with essential chromatin transactions, such as replication and transcription, and which are induced by reactive agents, such as UV light or formaldehyde. Associates with the DNA replication machinery and specifically removes DPCs during DNA synthesis. Catalyzes proteolytic cleavage of the hmces DNA-protein cross-link following unfolding by the brip1/fancj helicase. Acts as a pleiotropic protease for DNA-binding proteins cross-linked with DNA, such as top1, top2a, histones H3 and H4. Mediates degradation of DPCs that are not ubiquitinated, while it is not able to degrade ubiquitinated DPCs. SPRTN activation requires polymerase collision with DPCs followed by helicase bypass of DPCs. May also act as a 'reader' of ubiquitinated pcna: facilitates chromatin association of rad18 and is required for efficient pcna monoubiquitination, promoting a feed-forward loop to enhance pcna ubiquitination and translesion DNA synthesis. Acts as a regulator of translesion DNA synthesis by recruiting vcp/p97 to sites of DNA damage. The protein is DNA-dependent metalloprotease SPRTN of Xenopus tropicalis (Western clawed frog).